We begin with the raw amino-acid sequence, 360 residues long: DNA replication and repair protein RecF (360 aa).

30–37 serves as a coordination point for ATP; sequence GHNGSGKT.

It belongs to the RecF family.

The protein localises to the cytoplasm. The RecF protein is involved in DNA metabolism; it is required for DNA replication and normal SOS inducibility. RecF binds preferentially to single-stranded, linear DNA. It also seems to bind ATP. The sequence is that of DNA replication and repair protein RecF from Actinobacillus pleuropneumoniae serotype 3 (strain JL03).